Reading from the N-terminus, the 275-residue chain is Diaminopimelate epimerase (275 aa).

Positions 12, 45, and 65 each coordinate substrate. Cys-74 serves as the catalytic Proton donor. Residues 75 to 76 (GN), Asn-158, Asn-191, and 209 to 210 (ER) contribute to the substrate site. Cys-218 (proton acceptor) is an active-site residue. 219–220 (GT) serves as a coordination point for substrate.

The protein belongs to the diaminopimelate epimerase family. Homodimer.

The protein localises to the cytoplasm. It carries out the reaction (2S,6S)-2,6-diaminopimelate = meso-2,6-diaminopimelate. The protein operates within amino-acid biosynthesis; L-lysine biosynthesis via DAP pathway; DL-2,6-diaminopimelate from LL-2,6-diaminopimelate: step 1/1. Functionally, catalyzes the stereoinversion of LL-2,6-diaminopimelate (L,L-DAP) to meso-diaminopimelate (meso-DAP), a precursor of L-lysine and an essential component of the bacterial peptidoglycan. In Shewanella frigidimarina (strain NCIMB 400), this protein is Diaminopimelate epimerase.